A 526-amino-acid polypeptide reads, in one-letter code: Cytochrome P450 monooxygenase 58 (526 aa).

The next 3 helical transmembrane spans lie at 13 to 33 (IASSTIGQRILLALALGLLLI), 115 to 135 (FIMAGEILTGGMLIVFTGYGK), and 306 to 326 (IGAGAETTAASLSVFMLAMTL). C451 contributes to the heme binding site.

It belongs to the cytochrome P450 family. The cofactor is heme.

It localises to the membrane. It participates in secondary metabolite biosynthesis. Cytochrome P450 monooxygenase that is able to use delta(6)-protoilludene as a substrate to produce delta(6)-protoilludene-8-ol. In Postia placenta (strain ATCC 44394 / Madison 698-R) (Brown rot fungus), this protein is Cytochrome P450 monooxygenase 58.